Reading from the N-terminus, the 289-residue chain is Oxaloacetate decarboxylase (289 aa).

Residue Ser50 participates in substrate binding. A Mg(2+)-binding site is contributed by Asp88. Residues Arg159 and His235 each coordinate substrate.

This sequence belongs to the isocitrate lyase/PEP mutase superfamily. Oxaloacetate decarboxylase family. Homotetramer; dimer of dimers. Mg(2+) is required as a cofactor.

The catalysed reaction is oxaloacetate + H(+) = pyruvate + CO2. Catalyzes the decarboxylation of oxaloacetate into pyruvate. Seems to play a role in maintaining cellular concentrations of bicarbonate and pyruvate. The chain is Oxaloacetate decarboxylase from Pseudomonas putida (strain ATCC 47054 / DSM 6125 / CFBP 8728 / NCIMB 11950 / KT2440).